Reading from the N-terminus, the 442-residue chain is Serum response factor-binding protein 1 (442 aa).

2 coiled-coil regions span residues 55 to 77 and 118 to 140; these read EDAL…AMKE and LLKR…RQNA. Disordered regions lie at residues 137–336 and 358–442; these read RQNA…LETH and FHSL…TFDD. Basic and acidic residues-rich tracts occupy residues 149–159 and 167–188; these read ASKESQCEDIP and ESQH…DPTT. Lysine 202 participates in a covalent cross-link: Glycyl lysine isopeptide (Lys-Gly) (interchain with G-Cter in SUMO2). The residue at position 215 (serine 215) is a Phosphoserine. Residues 237 to 247 show a composition bias toward polar residues; it reads GNHSQGKASTR. Residues 266 to 278 show a composition bias toward acidic residues; sequence VSEEEKEYFDDST. Phosphoserine occurs at positions 277, 292, and 294. Lysine 329 participates in a covalent cross-link: Glycyl lysine isopeptide (Lys-Gly) (interchain with G-Cter in SUMO2). Serine 362 carries the post-translational modification Phosphoserine. Residues 367–382 are compositionally biased toward basic and acidic residues; the sequence is SRRDPREQAPKNKAPD.

In terms of assembly, interacts with SRF. Forms complexes with SRF and SRF cofactors ARID2, MYOCD and NKX2-5. Interacts with the N-terminus of SLC2A4.

Its subcellular location is the cytoplasm. The protein resides in the perinuclear region. May be involved in regulating transcriptional activation of cardiac genes during the aging process. May play a role in biosynthesis and/or processing of SLC2A4 in adipose cells. The chain is Serum response factor-binding protein 1 from Rattus norvegicus (Rat).